Reading from the N-terminus, the 516-residue chain is Cilia- and flagella-associated protein 53 (516 aa).

Coiled-coil stretches lie at residues 217-283 (EEKK…LQVK) and 316-440 (MQGY…RQMK). 2 stretches are compositionally biased toward basic and acidic residues: residues 417–436 (KELL…DRNA) and 461–472 (QAEREEEQREFE). Disordered regions lie at residues 417 to 443 (KELL…KVAQ) and 455 to 475 (YQQS…EAGL).

The protein belongs to the CFAP53 family.

It localises to the cytoplasm. The protein resides in the cytoskeleton. Its subcellular location is the cilium axoneme. The protein localises to the microtubule organizing center. It is found in the centrosome. It localises to the centriolar satellite. In terms of biological role, microtubule inner protein (MIP) part of the dynein-decorated doublet microtubules (DMTs) in cilia axoneme, which is required for motile cilia beating. Regulates motility patterns of both 9+0 and 9+2 motile cilia through differential localization and recruitment of axonemal dynein components. Required for motile cilium formation and movement. Involved in the establishment of left-right symmetry during embryogenesis. The sequence is that of Cilia- and flagella-associated protein 53 from Xenopus laevis (African clawed frog).